The chain runs to 272 residues: MNKIFAAFKPKGLSSNAFLSTLKKKYKNKKAGYSGTLDPFAKGVLIVAFGQYTKLFRFLKKTPKTYKATLWLGVYSLSLDDQNIKEIQNIKEFDLANLKQIIDQMQGIISYTPPQFSAKRINGTRAYELAKKGIEANLKPCQMEVFDCKILSYNHPFLNIEITVSEGAYIRSYCELFARKLGINATLSSLERIKEGKFVYNNEKSLNVLKYINLKPNFIKDLNKLENGAKIFVEELEFHDEGDYYIETEKYFSIINIKENTVKYLLNKVEKC.

The active-site Nucleophile is Asp-38.

The protein belongs to the pseudouridine synthase TruB family. Type 1 subfamily.

It carries out the reaction uridine(55) in tRNA = pseudouridine(55) in tRNA. Responsible for synthesis of pseudouridine from uracil-55 in the psi GC loop of transfer RNAs. This Campylobacter jejuni (strain RM1221) protein is tRNA pseudouridine synthase B.